The chain runs to 367 residues: Pyrimidine monooxygenase RutA (367 aa).

FMN-binding positions include 49-50, Asn115, Glu124, 140-141, and Ser190; these read IK and RY.

The protein belongs to the NtaA/SnaA/DszA monooxygenase family. RutA subfamily.

The enzyme catalyses uracil + FMNH2 + NADH + O2 = (Z)-3-ureidoacrylate + FMN + NAD(+) + H2O + H(+). It carries out the reaction thymine + FMNH2 + NADH + O2 = (Z)-2-methylureidoacrylate + FMN + NAD(+) + H2O + H(+). Functionally, catalyzes the pyrimidine ring opening between N-3 and C-4 by an unusual flavin hydroperoxide-catalyzed mechanism, adding oxygen atoms in the process to yield ureidoacrylate peracid, that immediately reacts with FMN forming ureidoacrylate and FMN-N(5)-oxide. The FMN-N(5)-oxide reacts spontaneously with NADH to produce FMN. Requires the flavin reductase RutF to regenerate FMN in vivo. The sequence is that of Pyrimidine monooxygenase RutA from Yersinia enterocolitica serotype O:8 / biotype 1B (strain NCTC 13174 / 8081).